A 202-amino-acid polypeptide reads, in one-letter code: Imidazoleglycerol-phosphate dehydratase (202 aa).

The protein belongs to the imidazoleglycerol-phosphate dehydratase family.

Its subcellular location is the cytoplasm. The catalysed reaction is D-erythro-1-(imidazol-4-yl)glycerol 3-phosphate = 3-(imidazol-4-yl)-2-oxopropyl phosphate + H2O. Its pathway is amino-acid biosynthesis; L-histidine biosynthesis; L-histidine from 5-phospho-alpha-D-ribose 1-diphosphate: step 6/9. The protein is Imidazoleglycerol-phosphate dehydratase of Acinetobacter baumannii (strain SDF).